The sequence spans 203 residues: Protein ILM1 (203 aa).

The Cytoplasmic segment spans residues 1–3 (MAQ). The chain crosses the membrane as a helical span at residues 4–24 (ALNSTNIAFFRVAFLFTIAFF). Over 25 to 58 (CLKNVNSILQNTYFIVLTQAMNLPQLTLSRYSGQ) the chain is Lumenal. A helical membrane pass occupies residues 59 to 79 (LGLFALLFTLNGVHDLIPLLE). The Cytoplasmic segment spans residues 80–92 (NNVKYFQSVVPVR). Residues 93-113 (LLIFFILTSISYLWESNFYVH) form a helical membrane-spanning segment. Position 114 (Asn-114) is a topological domain, lumenal. A helical membrane pass occupies residues 115 to 135 (NSVFIYCFAEVWINFLLYNAI). The Cytoplasmic portion of the chain corresponds to 136–203 (REEKNEEFKR…KGNDDSDAKK (68 aa)). The span at 175 to 187 (INDEENDDEDGKD) shows a compositional bias: acidic residues. Positions 175 to 203 (INDEENDDEDGKDNDDNNEKGNDDSDAKK) are disordered. Over residues 188 to 203 (NDDNNEKGNDDSDAKK) the composition is skewed to basic and acidic residues.

Belongs to the ILM1 family.

It is found in the endoplasmic reticulum membrane. The sequence is that of Protein ILM1 (ILM1) from Saccharomyces cerevisiae (strain ATCC 204508 / S288c) (Baker's yeast).